The chain runs to 206 residues: Large ribosomal subunit protein uL4 (206 aa).

The protein belongs to the universal ribosomal protein uL4 family. Part of the 50S ribosomal subunit.

In terms of biological role, one of the primary rRNA binding proteins, this protein initially binds near the 5'-end of the 23S rRNA. It is important during the early stages of 50S assembly. It makes multiple contacts with different domains of the 23S rRNA in the assembled 50S subunit and ribosome. Its function is as follows. Forms part of the polypeptide exit tunnel. The sequence is that of Large ribosomal subunit protein uL4 from Rhodopseudomonas palustris (strain ATCC BAA-98 / CGA009).